The chain runs to 149 residues: 3-dehydroquinate dehydratase 2 (149 aa).

Y24 (proton acceptor) is an active-site residue. Residues N75, H81, and D88 each contribute to the substrate site. H101 functions as the Proton donor in the catalytic mechanism. Residues 102 to 103 (LS) and R112 each bind substrate.

This sequence belongs to the type-II 3-dehydroquinase family. As to quaternary structure, homododecamer.

It catalyses the reaction 3-dehydroquinate = 3-dehydroshikimate + H2O. Its pathway is metabolic intermediate biosynthesis; chorismate biosynthesis; chorismate from D-erythrose 4-phosphate and phosphoenolpyruvate: step 3/7. In terms of biological role, catalyzes a trans-dehydration via an enolate intermediate. The polypeptide is 3-dehydroquinate dehydratase 2 (aroQ2) (Pseudomonas putida (strain ATCC 47054 / DSM 6125 / CFBP 8728 / NCIMB 11950 / KT2440)).